The chain runs to 95 residues: Large ribosomal subunit protein eL42 (95 aa).

Residues cysteine 11, cysteine 14, cysteine 71, and cysteine 74 each contribute to the Zn(2+) site. The C4-type zinc finger occupies 11 to 74 (CPRCNTHTEH…QVLVITCTVC (64 aa)).

Belongs to the eukaryotic ribosomal protein eL42 family. In terms of assembly, part of the 50S ribosomal subunit. It depends on Zn(2+) as a cofactor.

Its function is as follows. Binds to the 23S rRNA. The chain is Large ribosomal subunit protein eL42 from Aeropyrum pernix (strain ATCC 700893 / DSM 11879 / JCM 9820 / NBRC 100138 / K1).